Here is a 137-residue protein sequence, read N- to C-terminus: 2-iminobutanoate/2-iminopropanoate deaminase (137 aa).

Ser-2 carries the post-translational modification N-acetylserine. Lys-13 and Lys-67 each carry N6-succinyllysine. Thr-74 bears the Phosphothreonine mark. Ser-136 is modified (phosphoserine).

It belongs to the RutC family. Homotrimer. Interacts with YTHDF2.

The protein resides in the cytoplasm. The protein localises to the nucleus. Its subcellular location is the peroxisome. It is found in the mitochondrion. It catalyses the reaction 2-iminobutanoate + H2O = 2-oxobutanoate + NH4(+). The enzyme catalyses 2-iminopropanoate + H2O = pyruvate + NH4(+). Functionally, catalyzes the hydrolytic deamination of enamine/imine intermediates that form during the course of normal metabolism. May facilitate the release of ammonia from these potentially toxic reactive metabolites, reducing their impact on cellular components. It may act on enamine/imine intermediates formed by several types of pyridoxal-5'-phosphate-dependent dehydratases including L-threonine dehydratase. Also promotes endoribonucleolytic cleavage of some transcripts by promoting recruitment of the ribonuclease P/MRP complex. Acts by bridging YTHDF2 and the ribonuclease P/MRP complex. RIDA/HRSP12 binds to N6-methyladenosine (m6A)-containing mRNAs containing a 5'-GGUUC-3' motif: cooperative binding of RIDA/HRSP12 and YTHDF2 to such transcripts lead to recruitment of the ribonuclease P/MRP complex and subsequent endoribonucleolytic cleavage. The polypeptide is 2-iminobutanoate/2-iminopropanoate deaminase (Bos taurus (Bovine)).